Reading from the N-terminus, the 112-residue chain is Integration host factor subunit alpha (112 aa).

This sequence belongs to the bacterial histone-like protein family. In terms of assembly, heterodimer of an alpha and a beta chain.

Functionally, this protein is one of the two subunits of integration host factor, a specific DNA-binding protein that functions in genetic recombination as well as in transcriptional and translational control. This chain is Integration host factor subunit alpha, found in Rhizobium rhizogenes (strain K84 / ATCC BAA-868) (Agrobacterium radiobacter).